An 89-amino-acid chain; its full sequence is MSSQQQKQPCTPPPQLQQQQVKQPCQPPPQEPCIPKTKEPCHPKVPEPCHPKVPEPCQPKVPEPCHPKVPEPCPSIVTPAPAQQKTKQK.

A disordered region spans residues 1 to 29 (MSSQQQKQPCTPPPQLQQQQVKQPCQPPP). 8 consecutive repeat copies span residues 3–14 (SQQQKQPCTPPP), 18–29 (QQQVKQPCQPPP), 31–38 (EPCIPKTK), 39–46 (EPCHPKVP), 47–54 (EPCHPKVP), 55–62 (EPCQPKVP), 63–70 (EPCHPKVP), and 71–78 (EPCPSIVT). Residues 3–29 (SQQQKQPCTPPPQLQQQQVKQPCQPPP) are 2 X 12 AA approximate repeats. The tract at residues 31-78 (EPCIPKTKEPCHPKVPEPCHPKVPEPCQPKVPEPCHPKVPEPCPSIVT) is 6 X 8 AA approximate tandem repeats.

This sequence belongs to the cornifin (SPRR) family. The N-terminus is blocked. Suprabasal layers of squamous-differentiated tissues such as epidermis, esophagus, tongue and trachea.

The protein resides in the cytoplasm. Functionally, cross-linked envelope protein of keratinocytes. It is a keratinocyte protein that first appears in the cell cytosol, but ultimately becomes cross-linked to membrane proteins by transglutaminase. All that results in the formation of an insoluble envelope beneath the plasma membrane. Can function as both amine donor and acceptor in transglutaminase-mediated cross-linkage. This chain is Cornifin-B (SPRR1B), found in Homo sapiens (Human).